The following is a 107-amino-acid chain: Guanylin (107 aa).

An N-terminal signal peptide occupies residues 1–20; it reads MNTFLLSALCLGAWAALVGA. The propeptide occupies 21-92; the sequence is VTVQDGDFSF…LNRLAVIAQD (72 aa). Intrachain disulfides connect cysteine 61/cysteine 74, cysteine 96/cysteine 104, and cysteine 99/cysteine 107.

This sequence belongs to the guanylin family.

Its subcellular location is the secreted. In terms of biological role, endogenous activator of intestinal guanylate cyclase. It stimulates this enzyme through the same receptor binding region as the heat-stable enterotoxins. The sequence is that of Guanylin (GUCA2A) from Cavia porcellus (Guinea pig).